The chain runs to 238 residues: Probable transcriptional regulatory protein MGAS2096_Spy0287 (238 aa).

Belongs to the TACO1 family. YeeN subfamily.

The protein localises to the cytoplasm. In Streptococcus pyogenes serotype M12 (strain MGAS2096), this protein is Probable transcriptional regulatory protein MGAS2096_Spy0287.